An 89-amino-acid polypeptide reads, in one-letter code: Small ribosomal subunit protein uS14 (89 aa).

The protein belongs to the universal ribosomal protein uS14 family. As to quaternary structure, part of the 30S ribosomal subunit. Contacts proteins S3 and S10.

Its function is as follows. Binds 16S rRNA, required for the assembly of 30S particles and may also be responsible for determining the conformation of the 16S rRNA at the A site. In Streptococcus pneumoniae serotype 2 (strain D39 / NCTC 7466), this protein is Small ribosomal subunit protein uS14.